Here is a 132-residue protein sequence, read N- to C-terminus: Protein NrdI (132 aa).

It belongs to the NrdI family.

Probably involved in ribonucleotide reductase function. In Bartonella tribocorum (strain CIP 105476 / IBS 506), this protein is Protein NrdI.